The sequence spans 311 residues: Porphobilinogen deaminase (311 aa).

Cys243 is subject to S-(dipyrrolylmethanemethyl)cysteine.

The protein belongs to the HMBS family. In terms of assembly, monomer. Dipyrromethane serves as cofactor.

It catalyses the reaction 4 porphobilinogen + H2O = hydroxymethylbilane + 4 NH4(+). It functions in the pathway porphyrin-containing compound metabolism; protoporphyrin-IX biosynthesis; coproporphyrinogen-III from 5-aminolevulinate: step 2/4. Its function is as follows. Tetrapolymerization of the monopyrrole PBG into the hydroxymethylbilane pre-uroporphyrinogen in several discrete steps. The polypeptide is Porphobilinogen deaminase (Blochmanniella floridana).